A 265-amino-acid chain; its full sequence is Short chain dehydrogenase mdpC (265 aa).

Positions 25, 98, and 131 each coordinate NADP(+). Residues Ser147 and Ser148 each act as proton donor in the active site. The NADP(+) site is built by Tyr162, Lys166, and Thr197. Catalysis depends on Tyr162, which acts as the Proton acceptor. The active-site Lowers pKa of active site Tyr is the Lys166.

This sequence belongs to the short-chain dehydrogenases/reductases (SDR) family.

The catalysed reaction is 3,8,9,10-tetrahydroxy-6-methyl-1,4-dihydroanthracen-1-one + NADPH + H(+) = (3R)-3,8,9,10-tetrahydroxy-6-methyl-1,2,3,4-tetrahydroanthracen-1-one + NADP(+). The protein operates within secondary metabolite biosynthesis. Its function is as follows. Short chain dehydrogenase; part of the gene cluster that mediates the biosynthesis of monodictyphenone, a prenyl xanthone derivative. The pathway begins with the synthesis of atrochrysone thioester by the polyketide synthase (PKS) mdpG. The atrochrysone carboxyl ACP thioesterase mdpF then breaks the thioester bond and releases the atrochrysone carboxylic acid from mdpG. The atrochrysone carboxylic acid is then converted to atrochrysone which is further transformed into emodin anthrone. The next step is performed by the anthrone oxygenase mdpH that catalyzes the oxidation of emodinanthrone to emodin. Emodin is further modified to yield monodictyphenone via several steps involving mdpB, mdpC mdpJ, mdpK and mdpL. The short chain dehydrogenase mdpC converts the tautomers of emodin hydroquinone into the 3-hydroxy-3,4-dihydroan-thracen-1(2H)-one derivative. These enzymes with xptA, xptB and xptC are also proposed to be involved in the synthesis of shamixanthone from emodin. Especially, direct reduction of emodin by the short chain dehydrogenase mdpC followed by dehydration catalyzed by the scytalone dehydratase-like protein mdpB gives loss of oxygen and formation of chrysophanol intermediate in two simple steps. The sequence is that of Short chain dehydrogenase mdpC from Emericella nidulans (strain FGSC A4 / ATCC 38163 / CBS 112.46 / NRRL 194 / M139) (Aspergillus nidulans).